A 260-amino-acid polypeptide reads, in one-letter code: UPF0246 protein SCO2297 (260 aa).

This sequence belongs to the UPF0246 family.

The chain is UPF0246 protein SCO2297 from Streptomyces coelicolor (strain ATCC BAA-471 / A3(2) / M145).